The chain runs to 376 residues: Mitogen-activated protein kinase 5 (376 aa).

A Protein kinase domain is found at 43–329 (VPPIRPIGRG…VEEALCYPYL (287 aa)). ATP contacts are provided by residues 49–57 (IGRGAYGFV) and K72. Residue D169 is the Proton acceptor of the active site. T201 is subject to Phosphothreonine. The TXY motif lies at 201-203 (TEY). A Phosphotyrosine modification is found at Y203. The residue at position 206 (T206) is a Phosphothreonine.

The protein belongs to the protein kinase superfamily. CMGC Ser/Thr protein kinase family. MAP kinase subfamily. In terms of processing, autophosphorylated on threonine and tyrosine residues. Dually phosphorylated on Thr-201 and Tyr-203, which activates the enzyme.

The enzyme catalyses L-seryl-[protein] + ATP = O-phospho-L-seryl-[protein] + ADP + H(+). It catalyses the reaction L-threonyl-[protein] + ATP = O-phospho-L-threonyl-[protein] + ADP + H(+). With respect to regulation, activated by threonine and tyrosine phosphorylation. Activated by the MAP kinase kinase MKK2. Activated by the MAP kinase kinase MKK6 in vitro. The protein is Mitogen-activated protein kinase 5 (MPK5) of Arabidopsis thaliana (Mouse-ear cress).